The sequence spans 321 residues: Probable arabinan endo-1,5-alpha-L-arabinosidase C (321 aa).

Residues M1–A18 form the signal peptide. Catalysis depends on D33, which acts as the Proton acceptor. A glycan (N-linked (GlcNAc...) asparagine) is linked at N192. The active-site Proton donor is the E200. An N-linked (GlcNAc...) asparagine glycan is attached at N224.

The protein belongs to the glycosyl hydrolase 43 family.

Its subcellular location is the secreted. The enzyme catalyses Endohydrolysis of (1-&gt;5)-alpha-arabinofuranosidic linkages in (1-&gt;5)-arabinans.. Its pathway is glycan metabolism; L-arabinan degradation. Its function is as follows. Endo-1,5-alpha-L-arabinanase involved in degradation of pectin. Its preferred substrate is linear 1,5-alpha-L-arabinan. The sequence is that of Probable arabinan endo-1,5-alpha-L-arabinosidase C (abnC) from Aspergillus fumigatus (strain CBS 144.89 / FGSC A1163 / CEA10) (Neosartorya fumigata).